The sequence spans 292 residues: Ribosomal RNA small subunit methyltransferase A (292 aa).

6 residues coordinate S-adenosyl-L-methionine: asparagine 28, leucine 30, glycine 55, glutamate 76, aspartate 101, and asparagine 126.

It belongs to the class I-like SAM-binding methyltransferase superfamily. rRNA adenine N(6)-methyltransferase family. RsmA subfamily.

It is found in the cytoplasm. It catalyses the reaction adenosine(1518)/adenosine(1519) in 16S rRNA + 4 S-adenosyl-L-methionine = N(6)-dimethyladenosine(1518)/N(6)-dimethyladenosine(1519) in 16S rRNA + 4 S-adenosyl-L-homocysteine + 4 H(+). Specifically dimethylates two adjacent adenosines (A1518 and A1519) in the loop of a conserved hairpin near the 3'-end of 16S rRNA in the 30S particle. May play a critical role in biogenesis of 30S subunits. The protein is Ribosomal RNA small subunit methyltransferase A of Bacillus anthracis.